Reading from the N-terminus, the 499-residue chain is L-arabinose isomerase (499 aa).

Residues Glu-306, Glu-333, His-350, and His-449 each contribute to the Mn(2+) site.

The protein belongs to the arabinose isomerase family. Mn(2+) serves as cofactor.

It carries out the reaction beta-L-arabinopyranose = L-ribulose. Its pathway is carbohydrate degradation; L-arabinose degradation via L-ribulose; D-xylulose 5-phosphate from L-arabinose (bacterial route): step 1/3. Its function is as follows. Catalyzes the conversion of L-arabinose to L-ribulose. This Tolumonas auensis (strain DSM 9187 / NBRC 110442 / TA 4) protein is L-arabinose isomerase.